Here is a 496-residue protein sequence, read N- to C-terminus: Cytochrome P450 71D180 (496 aa).

The chain crosses the membrane as a helical; Signal-anchor for type II membrane protein span at residues 1-21 (MDISISWVVIIVFVLSYLILM). Cys435 is a heme binding site.

It belongs to the cytochrome P450 family. Heme serves as cofactor. Mostly expressed in flowers and, to a lower extent, in leaves, especially in glandular trichomes.

The protein localises to the membrane. It carries out the reaction (4R)-limonene + reduced [NADPH--hemoprotein reductase] + O2 = (1R,5S)-carveol + oxidized [NADPH--hemoprotein reductase] + H2O + H(+). The catalysed reaction is (4S)-limonene + reduced [NADPH--hemoprotein reductase] + O2 = (1S,5R)-carveol + oxidized [NADPH--hemoprotein reductase] + H2O + H(+). The enzyme catalyses gamma-terpinene + 2 reduced [NADPH--hemoprotein reductase] + 2 O2 = carvacrol + 2 oxidized [NADPH--hemoprotein reductase] + 3 H2O + 2 H(+). It participates in secondary metabolite biosynthesis; terpenoid biosynthesis. In terms of biological role, involved in the biosynthesis of phenolic monoterpenes natural products thymol and carvacrol which have a broad range of biological activities acting as antimicrobial compounds, insecticides, antioxidants and pharmaceutical agents. Catalyzes the C2-hydroxylation of gamma-terpinene to produce carvacrol. Mediates also the C6-hydroxylation of (4S)-limonene and (4R)-limonene to form carveol. The chain is Cytochrome P450 71D180 from Thymus vulgaris (Thyme).